The following is a 290-amino-acid chain: Ribosomal protein L11 methyltransferase (290 aa).

4 residues coordinate S-adenosyl-L-methionine: Thr135, Gly158, Asp180, and Asn227.

Belongs to the methyltransferase superfamily. PrmA family.

Its subcellular location is the cytoplasm. The catalysed reaction is L-lysyl-[protein] + 3 S-adenosyl-L-methionine = N(6),N(6),N(6)-trimethyl-L-lysyl-[protein] + 3 S-adenosyl-L-homocysteine + 3 H(+). Methylates ribosomal protein L11. This Chelativorans sp. (strain BNC1) protein is Ribosomal protein L11 methyltransferase.